Consider the following 199-residue polypeptide: NAD(P)H dehydrogenase (quinone) (199 aa).

The 187-residue stretch at 4–190 folds into the Flavodoxin-like domain; sequence ILVLYYSTYG…DGARFQGRHV (187 aa). FMN is bound by residues 10–15 and 78–80; these read STYGHI and TRF. Y12 serves as a coordination point for NAD(+). W98 provides a ligand contact to substrate. Residues 113 to 119 and H134 contribute to the FMN site; that span reads STATQHG.

This sequence belongs to the WrbA family. Requires FMN as cofactor.

The catalysed reaction is a quinone + NADH + H(+) = a quinol + NAD(+). It catalyses the reaction a quinone + NADPH + H(+) = a quinol + NADP(+). This chain is NAD(P)H dehydrogenase (quinone), found in Rhizorhabdus wittichii (strain DSM 6014 / CCUG 31198 / JCM 15750 / NBRC 105917 / EY 4224 / RW1) (Sphingomonas wittichii).